The primary structure comprises 456 residues: PTS system sucrose-specific EIIBC component (456 aa).

A PTS EIIB type-1 domain is found at 4–87 (EQISRSLLPL…IQAAGISESS (84 aa)). The active-site Phosphocysteine intermediate; for EIIB activity is the C26. A PTS EIIC type-1 domain is found at 107-456 (RLLSNIFVPI…LTLKYKTDAE (350 aa)). 10 helical membrane-spanning segments follow: residues 112 to 132 (IFVP…LLGM), 144 to 164 (ALYI…PILI), 181 to 201 (TLGG…AAGF), 209 to 229 (IEVA…AVWF), 247 to 267 (LILT…LLIG), 288 to 308 (AGWL…ITGI), 329 to 349 (FLLP…FAVW), 360 to 380 (ITLP…IFGI), 388 to 408 (FIAA…MHVY), and 428 to 448 (LLNY…LSLT).

It localises to the cell inner membrane. It catalyses the reaction N(pros)-phospho-L-histidyl-[protein](out) + sucrose = sucrose 6(G)-phosphate(in) + L-histidyl-[protein]. The phosphoenolpyruvate-dependent sugar phosphotransferase system (sugar PTS), a major carbohydrate active transport system, catalyzes the phosphorylation of incoming sugar substrates concomitantly with their translocation across the cell membrane. This system is involved in sucrose transport. In Klebsiella pneumoniae, this protein is PTS system sucrose-specific EIIBC component.